The following is a 230-amino-acid chain: RNA-binding riboflavin kinase RibR (230 aa).

This sequence belongs to the RibR family.

The enzyme catalyses riboflavin + ATP = FMN + ADP + H(+). May be directly involved in the regulation of the rib genes. C-terminal part of RibR specifically binds to RFN of the rib leader of the riboflavin biosynthetic operon. The RFN element is a sequence within the rib-leader mRNA reported to serve as a receptor for an FMN-dependent riboswitch. Possibly, RibR produces the comodulator FMN through its own N-terminal flavokinase activity. FMN-activated RibR may stabilize the anti-anti terminator structure of RFN mRNA, causing transcription termination of the rib genes in trans. The polypeptide is RNA-binding riboflavin kinase RibR (ribR) (Bacillus subtilis (strain 168)).